The following is a 478-amino-acid chain: Alpha-1,3-mannosyl-glycoprotein 4-beta-N-acetylglucosaminyltransferase C (478 aa).

Topologically, residues 1-23 (MFKFHQVKHIFEILDKMRCLRKR) are cytoplasmic. The helical; Signal-anchor for type II membrane protein transmembrane segment at 24 to 44 (FTVSFLGVLVIFLLFMNLYIE) threads the bilayer. Residues 45–478 (DSYVLEGDKQ…IIRSISIWTS (434 aa)) lie on the Lumenal side of the membrane. 3 N-linked (GlcNAc...) asparagine glycosylation sites follow: Asn-84, Asn-215, and Asn-348.

The protein belongs to the glycosyltransferase 54 family. Requires a divalent metal cation as cofactor.

It is found in the golgi apparatus membrane. The catalysed reaction is N(4)-{beta-D-GlcNAc-(1-&gt;2)-alpha-D-Man-(1-&gt;3)-[beta-D-GlcNAc-(1-&gt;2)-alpha-D-Man-(1-&gt;6)]-beta-D-Man-(1-&gt;4)-beta-D-GlcNAc-(1-&gt;4)-beta-D-GlcNAc}-L-asparaginyl-[protein] + UDP-N-acetyl-alpha-D-glucosamine = N(4)-{beta-D-GlcNAc-(1-&gt;2)-[beta-D-GlcNAc-(1-&gt;4)]-alpha-D-Man-(1-&gt;3)-[beta-D-GlcNAc-(1-&gt;2)-alpha-D-Man-(1-&gt;6)]-beta-D-Man-(1-&gt;4)-beta-D-GlcNAc-(1-&gt;4)-beta-D-GlcNAc}-L-asparaginyl-[protein] + UDP + H(+). It participates in protein modification; protein glycosylation. Glycosyltransferase that participates in the transfer of N-acetylglucosamine (GlcNAc) to the core mannose residues of N-linked glycans. Catalyzes the formation of the GlcNAcbeta1-4 branch on the GlcNAcbeta1-2Manalpha1-3 arm of the core structure of N-linked glycans. Essential for the production of tri- and tetra-antennary N-linked sugar chains. Does not catalyze the transfer of GlcNAc to the Manalpha1-6 arm to form GlcNAcBeta1-4Manalpha1-6 linkage ('GnT-VI' activity). This chain is Alpha-1,3-mannosyl-glycoprotein 4-beta-N-acetylglucosaminyltransferase C (MGAT4C), found in Sus scrofa (Pig).